A 153-amino-acid polypeptide reads, in one-letter code: Putative pre-16S rRNA nuclease (153 aa).

The protein belongs to the YqgF nuclease family.

It localises to the cytoplasm. Its function is as follows. Could be a nuclease involved in processing of the 5'-end of pre-16S rRNA. This is Putative pre-16S rRNA nuclease from Koribacter versatilis (strain Ellin345).